Reading from the N-terminus, the 666-residue chain is SNARE-interacting protein KEULE (666 aa).

Positions K340 to L377 form a coiled coil. The segment at K534 to D589 is disordered. Positions S550–M568 are enriched in low complexity.

It belongs to the STXBP/unc-18/SEC1 family. In terms of assembly, binds the syntaxin KNOLLE. Interacts with SEC6. Expressed throughout the plant, both in mitotically active and quiescent cells. Enriched in dividing tissues.

The protein localises to the cytoplasm. It localises to the membrane. The protein resides in the cytoskeleton. Its subcellular location is the phragmoplast. In terms of biological role, regulator of vesicle trafficking involved in cytokinesis and root hair development, but not required for cell elongation. The polypeptide is SNARE-interacting protein KEULE (KEU) (Arabidopsis thaliana (Mouse-ear cress)).